Consider the following 262-residue polypeptide: Nitrilase (262 aa).

The CN hydrolase domain maps to 2 to 237 (VKVAYVQMNP…EEVGVAEIDL (236 aa)). Catalysis depends on Glu-42, which acts as the Proton acceptor. Lys-113 acts as the Proton donor in catalysis. The Nucleophile role is filled by Cys-146. Position 173–174 (173–174 (VM)) interacts with substrate.

Belongs to the carbon-nitrogen hydrolase superfamily. In terms of assembly, homodimer.

The catalysed reaction is a nitrile + 2 H2O = a carboxylate + NH4(+). With respect to regulation, enzymatic activity is inhibited in the presence of acetone, methanol and metal ions such as Ag(2+) and Hg(2+). Is also inhibited by various thiol reagents such as DTNB, p-chloromercuribenzoate, p-hydroxymercuribenzoate, iodacetamide and iodacetate. EDTA has no influence on activity. In terms of biological role, nitrilase that hydrolyzes preferentially aliphatic nitriles like malononitrile and fumaronitrile in vitro. These dinitriles are converted to the corresponding monoacid mononitriles, showing the enzyme is regioselective. Cannot hydrolyze compounds with a nitrile group bound to an aromatic ring or amino acid. Its biological role is unknown. The protein is Nitrilase of Pyrococcus abyssi (strain GE5 / Orsay).